We begin with the raw amino-acid sequence, 565 residues long: Laccase-12 (565 aa).

The signal sequence occupies residues 1-24 (MTTVHTFSILLFFCSLFSASLIIA). Plastocyanin-like domains follow at residues 32-148 (VIQE…PTPG) and 158-310 (RQTA…YKKT). Residue Asn78 is glycosylated (N-linked (GlcNAc...) asparagine). Residues His82, His84, His127, and His129 each coordinate Cu cation. Asn187, Asn203, Asn298, Asn325, Asn377, Asn387, Asn395, and Asn428 each carry an N-linked (GlcNAc...) asparagine glycan. In terms of domain architecture, Plastocyanin-like 3 spans 413 to 549 (DFPSKPPVKF…AMAFLVDNGV (137 aa)). Cu cation is bound by residues His466, His469, His471, His528, Cys529, His530, and His534.

The protein belongs to the multicopper oxidase family. Requires Cu cation as cofactor. Predominantly expressed in the inflorescence stem.

The protein localises to the secreted. The protein resides in the extracellular space. Its subcellular location is the apoplast. It catalyses the reaction 4 hydroquinone + O2 = 4 benzosemiquinone + 2 H2O. Its function is as follows. Lignin degradation and detoxification of lignin-derived products. The protein is Laccase-12 (LAC12) of Arabidopsis thaliana (Mouse-ear cress).